The following is a 346-amino-acid chain: Phosphoribosylformylglycinamidine cyclo-ligase (346 aa).

The protein belongs to the AIR synthase family.

Its subcellular location is the cytoplasm. The catalysed reaction is 2-formamido-N(1)-(5-O-phospho-beta-D-ribosyl)acetamidine + ATP = 5-amino-1-(5-phospho-beta-D-ribosyl)imidazole + ADP + phosphate + H(+). It functions in the pathway purine metabolism; IMP biosynthesis via de novo pathway; 5-amino-1-(5-phospho-D-ribosyl)imidazole from N(2)-formyl-N(1)-(5-phospho-D-ribosyl)glycinamide: step 2/2. The sequence is that of Phosphoribosylformylglycinamidine cyclo-ligase from Bacillus cereus (strain AH187).